The sequence spans 176 residues: Cytochrome b (176 aa).

Helical transmembrane passes span 33-53, 77-98, and 113-133; these read FGSLLGICLALQILTGLFLAM, WILRYLHANGASMFFICLYLHV, and WNIGVTPLFAVMATAFMGYVL. His83 and His97 together coordinate heme b.

Belongs to the cytochrome b family. As to quaternary structure, the cytochrome bc1 complex contains 11 subunits: 3 respiratory subunits (MT-CYB, CYC1 and UQCRFS1), 2 core proteins (UQCRC1 and UQCRC2) and 6 low-molecular weight proteins (UQCRH/QCR6, UQCRB/QCR7, UQCRQ/QCR8, UQCR10/QCR9, UQCR11/QCR10 and a cleavage product of UQCRFS1). This cytochrome bc1 complex then forms a dimer. Requires heme b as cofactor.

It is found in the mitochondrion inner membrane. Functionally, component of the ubiquinol-cytochrome c reductase complex (complex III or cytochrome b-c1 complex) that is part of the mitochondrial respiratory chain. The b-c1 complex mediates electron transfer from ubiquinol to cytochrome c. Contributes to the generation of a proton gradient across the mitochondrial membrane that is then used for ATP synthesis. This is Cytochrome b (MT-CYB) from Myotis leibii (Eastern small-footed myotis).